A 217-amino-acid chain; its full sequence is Peptide methionine sulfoxide reductase MsrA (217 aa).

Cys56 is an active-site residue.

This sequence belongs to the MsrA Met sulfoxide reductase family.

The catalysed reaction is L-methionyl-[protein] + [thioredoxin]-disulfide + H2O = L-methionyl-(S)-S-oxide-[protein] + [thioredoxin]-dithiol. The enzyme catalyses [thioredoxin]-disulfide + L-methionine + H2O = L-methionine (S)-S-oxide + [thioredoxin]-dithiol. Has an important function as a repair enzyme for proteins that have been inactivated by oxidation. Catalyzes the reversible oxidation-reduction of methionine sulfoxide in proteins to methionine. This Corynebacterium melassecola protein is Peptide methionine sulfoxide reductase MsrA.